The primary structure comprises 292 residues: ABC transporter ATP-binding protein YtrB (292 aa).

The ABC transporter domain occupies 2–227; that stretch reads IELRQLSKAI…YIKIQMAFDT (226 aa). An ATP-binding site is contributed by 34 to 41; that stretch reads GRNGSGKT.

This sequence belongs to the ABC transporter superfamily. The complex is composed of 2 ATP-binding proteins (YtrB and YtrE), 2 transmembrane proteins (YtrC and YtrD) and a solute-binding protein (YtrF).

The protein localises to the cell membrane. Part of the ABC transporter complex YtrBCDEF that plays a role in acetoin utilization during stationary phase and sporulation. This chain is ABC transporter ATP-binding protein YtrB (ytrB), found in Bacillus subtilis (strain 168).